A 312-amino-acid chain; its full sequence is Homoserine O-succinyltransferase (312 aa).

The Acyl-thioester intermediate role is filled by Cys142. Positions 163 and 192 each coordinate substrate. His235 functions as the Proton acceptor in the catalytic mechanism. Glu237 is an active-site residue. Residue Arg249 participates in substrate binding.

It belongs to the MetA family.

The protein resides in the cytoplasm. It catalyses the reaction L-homoserine + succinyl-CoA = O-succinyl-L-homoserine + CoA. It functions in the pathway amino-acid biosynthesis; L-methionine biosynthesis via de novo pathway; O-succinyl-L-homoserine from L-homoserine: step 1/1. Functionally, transfers a succinyl group from succinyl-CoA to L-homoserine, forming succinyl-L-homoserine. The chain is Homoserine O-succinyltransferase from Aliivibrio salmonicida (strain LFI1238) (Vibrio salmonicida (strain LFI1238)).